Consider the following 294-residue polypeptide: Phosphonoacetaldehyde hydrolase (294 aa).

Asp19 functions as the Nucleophile in the catalytic mechanism. Residues Asp19 and Ala21 each contribute to the Mg(2+) site. Residue Lys60 is the Schiff-base intermediate with substrate of the active site. Residue Asp193 participates in Mg(2+) binding.

Belongs to the HAD-like hydrolase superfamily. PhnX family. Homodimer. Requires Mg(2+) as cofactor.

The catalysed reaction is phosphonoacetaldehyde + H2O = acetaldehyde + phosphate + H(+). Its function is as follows. Involved in phosphonate degradation. The protein is Phosphonoacetaldehyde hydrolase of Hahella chejuensis (strain KCTC 2396).